The primary structure comprises 329 residues: tRNA (cytidine(32)/guanosine(34)-2'-O)-methyltransferase (329 aa).

The S-adenosyl-L-methionine site is built by G53, W55, D75, D91, and D116. Catalysis depends on K156, which acts as the Proton acceptor. The segment at 221 to 240 (DFNQLDGPTRIIVPFVTCGD) is required for binding to WDR6. At S271 the chain carries Phosphoserine.

It belongs to the class I-like SAM-binding methyltransferase superfamily. RNA methyltransferase RlmE family. TRM7 subfamily. Interacts with WDR6; the interaction is direct, and required for 2'-O-methylation of position 34 in substrate tRNAs. As to expression, found in fetal brain, lung, liver and kidney. Widely expressed in adult tissue; with high expression in heart and liver, lower expression in skeletal muscle, kidney, and pancreas and also lowly expressed in brain and lung. In the adult brain, expressed in amygdala, caudate nucleus, corpus callosum, hippocampus and thalamus.

The protein resides in the cytoplasm. It is found in the nucleus. The catalysed reaction is cytidine(32)/guanosine(34) in tRNA + 2 S-adenosyl-L-methionine = 2'-O-methylcytidine(32)/2'-O-methylguanosine(34) in tRNA + 2 S-adenosyl-L-homocysteine + 2 H(+). Inhibited by 2,6-diaminopurine (DAP); inhibition promotes UGA stop-codon readthrough during translation by misincorporation of tRNA(Trp) in the nascent polypeptide. In terms of biological role, methylates the 2'-O-ribose of nucleotides at positions 32 and 34 of the tRNA anticodon loop of substrate tRNAs. Requisite for faithful cytoplasmic translation. Requires THADA for methylation of the nucleotide at position 32 of the anticodon loop of substrate tRNAs. Requires WDR6 for methylation of the nucleotide at position 34 of the anticodon loop of substrate tRNAs. Promotes translation efficiency of the UUU codon. Plays a role in neurogenesis. Required for expression of genes involved in neurogenesis, mitochondrial translation and energy generation, and lipid biosynthesis. Requisite for RNA-mediated gene silencing. May modify position 32 in tRNA(Arg(ACG)), tRNA(Arg(CCG)), tRNA(Arg(UCG)), tRNA(Cys(GCA)), tRNA(Cys(ACA)), tRNA(Gln(CUG)), tRNA(Gln(UUG)), tRNA(Gly(CCC)), tRNA(Leu(CAG))/tRNA(Leu(CAA)), tRNA(Leu(A/IAG)), tRNA(Leu(UAG)), tRNA(Phe(GAA)), tRNA(Pro(AGG))/tRNA(Pro(CGG))/tRNA(Pro(UGG)) and tRNA(Trp(CCA)), and position 34 in tRNA(Phe(GAA)), tRNA(Leu(CAA)), tRNA(Sec(UCA)), and tRNA(Trp(CCA)). The polypeptide is tRNA (cytidine(32)/guanosine(34)-2'-O)-methyltransferase (Homo sapiens (Human)).